The following is a 385-amino-acid chain: Queuine tRNA-ribosyltransferase (385 aa).

Residue D93 is the Proton acceptor of the active site. Residues D93–F97, D147, Q191, and G218 contribute to the substrate site. The segment at G249–D255 is RNA binding. D268 acts as the Nucleophile in catalysis. The segment at T273–R277 is RNA binding; important for wobble base 34 recognition. C306, C308, C311, and H337 together coordinate Zn(2+).

This sequence belongs to the queuine tRNA-ribosyltransferase family. In terms of assembly, homodimer. Within each dimer, one monomer is responsible for RNA recognition and catalysis, while the other monomer binds to the replacement base PreQ1. Zn(2+) is required as a cofactor.

The catalysed reaction is 7-aminomethyl-7-carbaguanine + guanosine(34) in tRNA = 7-aminomethyl-7-carbaguanosine(34) in tRNA + guanine. It functions in the pathway tRNA modification; tRNA-queuosine biosynthesis. Catalyzes the base-exchange of a guanine (G) residue with the queuine precursor 7-aminomethyl-7-deazaguanine (PreQ1) at position 34 (anticodon wobble position) in tRNAs with GU(N) anticodons (tRNA-Asp, -Asn, -His and -Tyr). Catalysis occurs through a double-displacement mechanism. The nucleophile active site attacks the C1' of nucleotide 34 to detach the guanine base from the RNA, forming a covalent enzyme-RNA intermediate. The proton acceptor active site deprotonates the incoming PreQ1, allowing a nucleophilic attack on the C1' of the ribose to form the product. After dissociation, two additional enzymatic reactions on the tRNA convert PreQ1 to queuine (Q), resulting in the hypermodified nucleoside queuosine (7-(((4,5-cis-dihydroxy-2-cyclopenten-1-yl)amino)methyl)-7-deazaguanosine). The protein is Queuine tRNA-ribosyltransferase of Pasteurella multocida (strain Pm70).